A 362-amino-acid polypeptide reads, in one-letter code: Alternative oxidase, mitochondrial (362 aa).

A mitochondrion-targeting transit peptide spans 1–64 (MNTPKVNILY…RGFTTTSVVR (64 aa)). Residues 156-176 (LVRFIFLESIAGVPGMVAGML) traverse the membrane as a helical segment. 3 residues coordinate Fe cation: Glu163, Glu202, and His205. A helical transmembrane segment spans residues 222–242 (LILGAQGVFFNAMFLSYLVSP). Fe cation-binding residues include Glu253, Glu310, and His313.

Belongs to the alternative oxidase family. Requires Fe cation as cofactor.

Its subcellular location is the mitochondrion inner membrane. In terms of biological role, catalyzes cyanide-resistant oxygen consumption. May increase respiration when the cytochrome respiratory pathway is restricted, or in response to low temperatures. The chain is Alternative oxidase, mitochondrial (aod-1) from Gelasinospora sp. (strain S23).